The following is a 307-amino-acid chain: Type 2A encapsulin shell protein (307 aa).

Belongs to the encapsulin family. Family 2A subfamily. As to quaternary structure, homooligomeric. The encapsulin nanocompartment is formed by 60 subunits; monomers form pentamers which assemble to form shells. There are 12 charged pores where the pentamers meet as well as 3-fold axis channels and dimer channels.

The protein localises to the encapsulin nanocompartment. Shell component of a type 2A encapsulin nanocompartment. Forms encapsulin nanocompartments about 24 nm in diameter from 60 monomers. Probably encapsulates at least cysteine desulfurase (CyD) and allows passage of cysteine into its interior, probably involved in sulfur metabolism. This is Type 2A encapsulin shell protein from Mycobacterium avium.